The following is a 222-amino-acid chain: MGLFGKTQEKPPKELVNEWSLKIRKEMRVVDRQIRDIQREEEKVKRSVKDAAKKGQKDVCVVLAKEMIRSRKAVSKLYASKAHMNSVLMGMKNQLAVLRVAGSLQKSTEVMKAMQSLVKIPEIQATMRELSKEMMKAGIIEEMLEDTFESMDDQEEMEEEAEMEIDRILFEITAGALGKAPSKVTDALPEPEPSGAMAASEDEEEEEEALEAMQSRLATLRS.

Glycine 2 carries the N-myristoyl glycine lipid modification. Positions 2–113 (GLFGKTQEKP…LQKSTEVMKA (112 aa)) are intramolecular interaction with C-terminus. Residues 22–54 (KIRKEMRVVDRQIRDIQREEEKVKRSVKDAAKK) adopt a coiled-coil conformation. Important for autoinhibitory function regions lie at residues 59–64 (VCVVLA) and 168–169 (IL). Residues 141 to 222 (EEMLEDTFES…MQSRLATLRS (82 aa)) adopt a coiled-coil conformation. Residues 151–220 (MDDQEEMEEE…EAMQSRLATL (70 aa)) form an intramolecular interaction with N-terminus region. Positions 151-222 (MDDQEEMEEE…MQSRLATLRS (72 aa)) are interaction with VPS4A. Residue lysine 179 forms a Glycyl lysine isopeptide (Lys-Gly) (interchain with G-Cter in ubiquitin) linkage. Positions 180-222 (APSKVTDALPEPEPSGAMAASEDEEEEEEALEAMQSRLATLRS) are disordered. Interaction with STAMBP stretches follow at residues 196–222 (AMAA…TLRS), 203–207 (EEEEE), and 221–222 (RS). A Phosphoserine modification is found at serine 200. Positions 200-210 (SEDEEEEEEAL) are enriched in acidic residues. Residues 201–211 (EDEEEEEEALE) carry the MIT-interacting motif motif.

The protein belongs to the SNF7 family. Probable core component of the endosomal sorting required for transport complex III (ESCRT-III). ESCRT-III components are thought to multimerize to form a flat lattice on the perimeter membrane of the endosome. Several assembly forms of ESCRT-III may exist that interact and act sequentially. Forms a metastable monomer in solution; its core structure (without part of the putative autoinhibitory C-terminal acidic region) oligomerizes into a flat lattice via two different dimerization interfaces. In vitro, heteromerizes with CHMP2A (but not CHMP4) to form helical tubular structures that expose membrane-interacting sites on the outside whereas VPS4B can associate on the inside of the tubule. May interact with IGFBP7; the relevance of such interaction however remains unclear. Interacts with CHMP2A. Interacts with CHMP4A; the interaction requires the release of CHMP4A autoinhibition. Interacts with VPS4A. Interacts with STAMBP; the interaction appears to relieve the autoinhibition of CHMP3. Interacts with VTA1.

The protein resides in the cytoplasm. Its subcellular location is the cytosol. It is found in the membrane. It localises to the endosome. The protein localises to the late endosome membrane. In terms of biological role, probable core component of the endosomal sorting required for transport complex III (ESCRT-III) which is involved in multivesicular bodies (MVBs) formation and sorting of endosomal cargo proteins into MVBs. MVBs contain intraluminal vesicles (ILVs) that are generated by invagination and scission from the limiting membrane of the endosome and mostly are delivered to lysosomes enabling degradation of membrane proteins, such as stimulated growth factor receptors, lysosomal enzymes and lipids. The MVB pathway appears to require the sequential function of ESCRT-O, -I,-II and -III complexes. ESCRT-III proteins mostly dissociate from the invaginating membrane before the ILV is released. The ESCRT machinery also functions in topologically equivalent membrane fission events, such as the terminal stages of cytokinesis and the budding of enveloped viruses (lentiviruses). ESCRT-III proteins are believed to mediate the necessary vesicle extrusion and/or membrane fission activities, possibly in conjunction with the AAA ATPase VPS4. Selectively binds to phosphatidylinositol 3,5-bisphosphate PtdIns(3,5)P2 and PtdIns(3,4)P2 in preference to other phosphoinositides tested. Involved in late stages of cytokinesis. Plays a role in endosomal sorting/trafficking of EGF receptor. This is Charged multivesicular body protein 3 (CHMP3) from Pongo abelii (Sumatran orangutan).